A 626-amino-acid chain; its full sequence is Basic helix-loop-helix ARNT-like protein 1 (626 aa).

The tract at residues Met1 to Arg60 is disordered. Residue Ser17 is modified to Phosphoserine; by GSK3-beta. Low complexity predominate over residues Ser17 to Gly32. Thr21 bears the Phosphothreonine; by GSK3-beta mark. Positions Asn36 to Gly41 match the Nuclear localization signal motif. The segment covering Asp51 to Arg60 has biased composition (basic and acidic residues). One can recognise a bHLH domain in the interval Asn72–Leu125. Ser78 carries the phosphoserine modification. Residue Ser90 is modified to Phosphoserine; by CK2. Positions Leu142–Leu152 match the Nuclear export signal 1 motif. A PAS 1 domain is found at Ser143 to Pro215. A Glycyl lysine isopeptide (Lys-Gly) (interchain with G-Cter in SUMO2 and SUMO3) cross-link involves residue Lys252. Lys259 participates in a covalent cross-link: Glycyl lysine isopeptide (Lys-Gly) (interchain with G-Cter in SUMO2). The PAS 2 domain maps to Pro326–Arg396. The Nuclear export signal 2 motif lies at Leu361–Leu369. Residues Thr401 to Asn444 enclose the PAC domain. 2 disordered regions span residues Ala458–Gly493 and Gly511–Asn595. The segment covering Ile484–Gly493 has biased composition (gly residues). The segment at Arg508–Gln588 is interaction with CIART. Low complexity predominate over residues Gly511–Pro521. At Lys538 the chain carries N6-acetyllysine.

In terms of assembly, component of the circadian clock oscillator which includes the CRY1/2 proteins, CLOCK or NPAS2,BMAL1 or BMAL2, CSNK1D and/or CSNK1E, TIMELESS and the PER1/2/3 proteins. Forms a heterodimer with CLOCK. The CLOCK-BMAL1 heterodimer is required for E-box-dependent transactivation, for CLOCK nuclear translocation and degradation, and, for phosphorylation of both CLOCK and BMAL1. Part of a nuclear complex which also includes RACK1 and PRKCA; RACK1 and PRKCA are recruited to the complex in a circadian manner. Interacts with NPAS2. Interacts with EZH2. Interacts with SUMO3. Interacts with SIRT1. Interacts with AHR. Interacts with ID1, ID2 and ID3. Interacts with DDX4. Interacts with OGT. Interacts with EED and SUZ12. Interacts with MTA1. Interacts with CIART. Interacts with HSP90. Interacts with KAT2B and EP300. Interacts with BHLHE40/DEC1 and BHLHE41/DEC2. Interacts with RELB and the interaction is enhanced in the presence of CLOCK. Interacts with PER1, PER2, CRY1 and CRY2 and this interaction requires a translocation to the nucleus. Interaction of the CLOCK-BMAL1 heterodimer with PER or CRY inhibits transcription activation. Interaction of the CLOCK-BMAL1 with CRY1 is independent of DNA but with PER2 is off DNA. The CLOCK-BMAL1 heterodimer interacts with GSK3B. Interacts with KDM5A. Interacts with KMT2A; in a circadian manner. Interacts with UBE3A. Interacts with PRKCG. Interacts with MAGEL2. Interacts with NCOA2. Interacts with THRAP3. The CLOCK-BMAL1 heterodimer interacts with PASD1. Interacts with PASD1. Interacts with USP9X. Interacts with PIWIL2 (via PIWI domain). Interacts with HDAC3. Interacts with HNF4A. In terms of processing, ubiquitinated, leading to its proteasomal degradation. Deubiquitinated by USP9X. Post-translationally, O-glycosylated; contains O-GlcNAc. O-glycosylation by OGT prevents protein degradation by inhibiting ubiquitination. It also stabilizes the CLOCK-BMAL1 heterodimer thereby increasing CLOCK-BMAL1-mediated transcription of genes in the negative loop of the circadian clock such as PER1/2/3 and CRY1/2. Acetylated on Lys-538 by CLOCK during the repression phase of the circadian cycle. Acetylation facilitates recruitment of CRY1 protein and initiates the repression phase of the circadian cycle. Acetylated at Lys-538 by KAT5 during the activation phase of the cycle, leading to recruitment of the positive transcription elongation factor b (P-TEFb) and BRD4, followed by productive elongation of circadian transcripts. Deacetylated by SIRT1, which may result in decreased protein stability. In terms of processing, phosphorylated upon dimerization with CLOCK. Phosphorylation enhances the transcriptional activity, alters the subcellular localization and decreases the stability of the CLOCK-BMAL1 heterodimer by promoting its degradation. Phosphorylation shows circadian variations in the liver with a peak between CT10 to CT14. Phosphorylation at Ser-90 by CK2 is essential for its nuclear localization, its interaction with CLOCK and controls CLOCK nuclear entry. Dephosphorylation at Ser-78 is important for dimerization with CLOCK and transcriptional activity. Post-translationally, sumoylated on Lys-259 upon dimerization with CLOCK. Predominantly conjugated to poly-SUMO2/3 rather than SUMO1 and the level of these conjugates undergo rhythmic variation, peaking at CT9-CT12. Sumoylation localizes it exclusively to the PML body and promotes its ubiquitination in the PML body, ubiquitin-dependent proteasomal degradation and the transcriptional activity of the CLOCK-BMAL1 heterodimer. Undergoes lysosome-mediated degradation in a time-dependent manner in the liver. Hair follicles (at protein level). Highly expressed in the adult brain, skeletal muscle and heart.

It localises to the nucleus. The protein localises to the cytoplasm. Its subcellular location is the PML body. Its activity is regulated as follows. There is conflicting data about the effect of NAD cofactors on activity. PubMed:11441146 suggests that the redox state of the cell can modulate the transcriptional activity of the CLOCK-BMAL1 heterodimer; NADH and NADPH enhance the DNA-binding activity of the heterodimer. PubMed:23229515 reports that NADH and NADPH have no significant effect on DNA-binding activity of the CLOCK-BMAL1 heterodimer. In terms of biological role, transcriptional activator which forms a core component of the circadian clock. The circadian clock, an internal time-keeping system, regulates various physiological processes through the generation of approximately 24 hour circadian rhythms in gene expression, which are translated into rhythms in metabolism and behavior. It is derived from the Latin roots 'circa' (about) and 'diem' (day) and acts as an important regulator of a wide array of physiological functions including metabolism, sleep, body temperature, blood pressure, endocrine, immune, cardiovascular, and renal function. Consists of two major components: the central clock, residing in the suprachiasmatic nucleus (SCN) of the brain, and the peripheral clocks that are present in nearly every tissue and organ system. Both the central and peripheral clocks can be reset by environmental cues, also known as Zeitgebers (German for 'timegivers'). The predominant Zeitgeber for the central clock is light, which is sensed by retina and signals directly to the SCN. The central clock entrains the peripheral clocks through neuronal and hormonal signals, body temperature and feeding-related cues, aligning all clocks with the external light/dark cycle. Circadian rhythms allow an organism to achieve temporal homeostasis with its environment at the molecular level by regulating gene expression to create a peak of protein expression once every 24 hours to control when a particular physiological process is most active with respect to the solar day. Transcription and translation of core clock components (CLOCK, NPAS2, BMAL1, BMAL2, PER1, PER2, PER3, CRY1 and CRY2) plays a critical role in rhythm generation, whereas delays imposed by post-translational modifications (PTMs) are important for determining the period (tau) of the rhythms (tau refers to the period of a rhythm and is the length, in time, of one complete cycle). A diurnal rhythm is synchronized with the day/night cycle, while the ultradian and infradian rhythms have a period shorter and longer than 24 hours, respectively. Disruptions in the circadian rhythms contribute to the pathology of cardiovascular diseases, cancer, metabolic syndromes and aging. A transcription/translation feedback loop (TTFL) forms the core of the molecular circadian clock mechanism. Transcription factors, CLOCK or NPAS2 and BMAL1 or BMAL2, form the positive limb of the feedback loop, act in the form of a heterodimer and activate the transcription of core clock genes and clock-controlled genes (involved in key metabolic processes), harboring E-box elements (5'-CACGTG-3') within their promoters. The core clock genes: PER1/2/3 and CRY1/2 which are transcriptional repressors form the negative limb of the feedback loop and interact with the CLOCK|NPAS2-BMAL1|BMAL2 heterodimer inhibiting its activity and thereby negatively regulating their own expression. This heterodimer also activates nuclear receptors NR1D1/2 and RORA/B/G, which form a second feedback loop and which activate and repress BMAL1 transcription, respectively. BMAL1 positively regulates myogenesis and negatively regulates adipogenesis via the transcriptional control of the genes of the canonical Wnt signaling pathway. Plays a role in normal pancreatic beta-cell function; regulates glucose-stimulated insulin secretion via the regulation of antioxidant genes NFE2L2/NRF2 and its targets SESN2, PRDX3, CCLC and CCLM. Negatively regulates the mTORC1 signaling pathway; regulates the expression of MTOR and DEPTOR. Controls diurnal oscillations of Ly6C inflammatory monocytes; rhythmic recruitment of the PRC2 complex imparts diurnal variation to chemokine expression that is necessary to sustain Ly6C monocyte rhythms. Regulates the expression of HSD3B2, STAR, PTGS2, CYP11A1, CYP19A1 and LHCGR in the ovary and also the genes involved in hair growth. Plays an important role in adult hippocampal neurogenesis by regulating the timely entry of neural stem/progenitor cells (NSPCs) into the cell cycle and the number of cell divisions that take place prior to cell-cycle exit. Regulates the circadian expression of CIART and KLF11. The CLOCK-BMAL1 heterodimer regulates the circadian expression of SERPINE1/PAI1, VWF, B3, CCRN4L/NOC, NAMPT, DBP, MYOD1, PPARGC1A, PPARGC1B, SIRT1, GYS2, F7, NGFR, GNRHR, BHLHE40/DEC1, ATF4, MTA1, KLF10 and also genes implicated in glucose and lipid metabolism. Promotes rhythmic chromatin opening, regulating the DNA accessibility of other transcription factors. The NPAS2-BMAL1 heterodimer positively regulates the expression of MAOA, F7 and LDHA and modulates the circadian rhythm of daytime contrast sensitivity by regulating the rhythmic expression of adenylate cyclase type 1 (ADCY1) in the retina. The preferred binding motif for the CLOCK-BMAL1 heterodimer is 5'-CACGTGA-3', which contains a flanking adenine nucleotide at the 3-prime end of the canonical 6-nucleotide E-box sequence. CLOCK specifically binds to the half-site 5'-CAC-3', while BMAL1 binds to the half-site 5'-GTGA-3'. The CLOCK-BMAL1 heterodimer also recognizes the non-canonical E-box motifs 5'-AACGTGA-3' and 5'-CATGTGA-3'. Essential for the rhythmic interaction of CLOCK with ASS1 and plays a critical role in positively regulating CLOCK-mediated acetylation of ASS1. Plays a role in protecting against lethal sepsis by limiting the expression of immune checkpoint protein CD274 in macrophages in a PKM2-dependent manner. Regulates the diurnal rhythms of skeletal muscle metabolism via transcriptional activation of genes promoting triglyceride synthesis (DGAT2) and metabolic efficiency (COQ10B). Its function is as follows. (Microbial infection) Regulates SARS coronavirus-2/SARS-CoV-2 entry and replication in lung epithelial cells probably through the post-transcriptional regulation of ACE2 and interferon-stimulated gene expression. The polypeptide is Basic helix-loop-helix ARNT-like protein 1 (Homo sapiens (Human)).